Consider the following 244-residue polypeptide: MNGISNALNGLYDISGVEVGQHFYWQIAGFQVHAQVLITSWVVIAILLGSAVIAVRNPQTIPTAGQNFFEYVLEFIRDVSKTQIGEEYGPWVPFIGTMFLFIFVSNWSGALLPWKIIQLPHGELAAPTNDINTTVALALLTSVAYFYAGLSKKGLGYFSKYIQPTPILLPINILEDFTKPLSLSFRLFGNILADELVVVVLVSLVPSVVPIPVMFLGLFISGIQALIFATLAAAYIGESMEGHH.

5 consecutive transmembrane segments (helical) span residues 35–55 (QVLI…VIAV), 92–112 (VPFI…GALL), 131–151 (INTT…AGLS), 196–216 (LVVV…VMFL), and 217–237 (GLFI…AYIG).

It belongs to the ATPase A chain family. F-type ATPases have 2 components, CF(1) - the catalytic core - and CF(0) - the membrane proton channel. CF(1) has five subunits: alpha(3), beta(3), gamma(1), delta(1), epsilon(1). CF(0) has four main subunits: a, b, b' and c.

The protein localises to the plastid. The protein resides in the chloroplast thylakoid membrane. Functionally, key component of the proton channel; it plays a direct role in the translocation of protons across the membrane. The polypeptide is ATP synthase subunit a, chloroplastic (Gossypium barbadense (Sea Island cotton)).